The chain runs to 434 residues: Enolase (434 aa).

Substrate is bound by residues His158 and Glu167. Residue Glu210 is the Proton donor of the active site. Residues Asp245, Glu294, and Asp319 each contribute to the Mg(2+) site. Substrate-binding residues include Glu294 and Asp319. Catalysis depends on Lys344, which acts as the Proton acceptor. Substrate is bound by residues 371–374 and Lys395; that span reads SHRS.

The protein belongs to the enolase family. In terms of assembly, homodimer. Requires Mg(2+) as cofactor.

It localises to the cytoplasm. It catalyses the reaction (2R)-2-phosphoglycerate = phosphoenolpyruvate + H2O. The protein operates within carbohydrate degradation; glycolysis; pyruvate from D-glyceraldehyde 3-phosphate: step 4/5. This is Enolase (ENO) from Schistosoma japonicum (Blood fluke).